A 146-amino-acid chain; its full sequence is GYVNGLNAAEETLRENRSSGDMDGSAAAMRSVSHNGCGHYLHHLFWRCMTPNGGGGEPTGDLRDRIESDFGSYEGWEAEFREAASWPAGGWALLVYDPVTKQLRNLAVQKHNDGALWSAHPILALDVWEHSYYFQYGPDRGGFVDA.

3 residues coordinate Mn(2+): His42, Asp126, and His130.

The protein belongs to the iron/manganese superoxide dismutase family. Mn(2+) is required as a cofactor.

The catalysed reaction is 2 superoxide + 2 H(+) = H2O2 + O2. Functionally, destroys superoxide anion radicals which are normally produced within the cells and which are toxic to biological systems. This Haloferax mediterranei (Halobacterium mediterranei) protein is Superoxide dismutase [Mn] 2 (sod2).